A 190-amino-acid polypeptide reads, in one-letter code: Endo-1,4-beta-xylanase (190 aa).

One can recognise a GH11 domain in the interval 1-190; it reads QTIGPGTGYS…SSGSASITVS (190 aa). E86 serves as the catalytic Nucleophile. Residue E177 is the Proton donor of the active site.

This sequence belongs to the glycosyl hydrolase 11 (cellulase G) family.

It catalyses the reaction Endohydrolysis of (1-&gt;4)-beta-D-xylosidic linkages in xylans.. It participates in glycan degradation; xylan degradation. The sequence is that of Endo-1,4-beta-xylanase from Trichoderma harzianum (Hypocrea lixii).